Consider the following 240-residue polypeptide: Protein FAM246C (240 aa).

2 disordered regions span residues 1 to 117 (MAEP…WRSA) and 161 to 240 (LPAA…TRAA). Basic and acidic residues-rich tracts occupy residues 19 to 31 (EVLR…RRDP) and 60 to 74 (AASR…KLVE). Residues 165-175 (SPAPSPAPRPA) are compositionally biased toward pro residues. The segment covering 176 to 187 (ARPCRGRSAPLA) has biased composition (low complexity).

The protein belongs to the FAM246 family.

This chain is Protein FAM246C, found in Homo sapiens (Human).